We begin with the raw amino-acid sequence, 753 residues long: 5-methyltetrahydropteroyltriglutamate--homocysteine methyltransferase (753 aa).

Residues 17-20 (RELK) and Lys-117 each bind 5-methyltetrahydropteroyltri-L-glutamate. L-homocysteine is bound by residues 431-433 (IGS) and Glu-484. L-methionine is bound by residues 431–433 (IGS) and Glu-484. 5-methyltetrahydropteroyltri-L-glutamate-binding positions include 515-516 (RC) and Trp-561. Asp-599 contacts L-homocysteine. An L-methionine-binding site is contributed by Asp-599. Glu-605 contributes to the 5-methyltetrahydropteroyltri-L-glutamate binding site. His-641, Cys-643, and Glu-665 together coordinate Zn(2+). The Proton donor role is filled by His-694. Cys-726 is a binding site for Zn(2+).

Belongs to the vitamin-B12 independent methionine synthase family. Requires Zn(2+) as cofactor.

It carries out the reaction 5-methyltetrahydropteroyltri-L-glutamate + L-homocysteine = tetrahydropteroyltri-L-glutamate + L-methionine. It participates in amino-acid biosynthesis; L-methionine biosynthesis via de novo pathway; L-methionine from L-homocysteine (MetE route): step 1/1. Functionally, catalyzes the transfer of a methyl group from 5-methyltetrahydrofolate to homocysteine resulting in methionine formation. The chain is 5-methyltetrahydropteroyltriglutamate--homocysteine methyltransferase from Shigella sonnei (strain Ss046).